We begin with the raw amino-acid sequence, 119 residues long: Myohemerythrin-1 (119 aa).

8 residues coordinate Fe cation: His25, His55, Asn58, Glu59, His74, His78, His107, and Asp112.

The protein belongs to the hemerythrin family. In terms of assembly, monomer. In terms of tissue distribution, muscle.

Functionally, myohemerythrin is an oxygen-binding protein found in the retractor muscles of certain worms. The oxygen-binding site contains two iron atoms. In Phascolopsis gouldii (Peanut worm), this protein is Myohemerythrin-1.